The primary structure comprises 173 residues: dCTP deaminase, dUMP-forming (173 aa).

Residues Arg-93 to Arg-98, Asp-111, Thr-119 to Glu-121, and Gln-138 contribute to the dCTP site. Glu-121 (proton donor/acceptor) is an active-site residue.

It belongs to the dCTP deaminase family. As to quaternary structure, homotrimer.

It catalyses the reaction dCTP + 2 H2O = dUMP + NH4(+) + diphosphate. It functions in the pathway pyrimidine metabolism; dUMP biosynthesis; dUMP from dCTP: step 1/1. Its function is as follows. Bifunctional enzyme that catalyzes both the deamination of dCTP to dUTP and the hydrolysis of dUTP to dUMP without releasing the toxic dUTP intermediate. In Leptospira borgpetersenii serovar Hardjo-bovis (strain JB197), this protein is dCTP deaminase, dUMP-forming.